A 347-amino-acid chain; its full sequence is Biotin synthase (347 aa).

A Radical SAM core domain is found at 54–273; that stretch reads NHVETASLLS…IAVARIMMPK (220 aa). [4Fe-4S] cluster is bound by residues cysteine 69, cysteine 73, and cysteine 76. The [2Fe-2S] cluster site is built by cysteine 113, cysteine 144, cysteine 204, and arginine 277.

Belongs to the radical SAM superfamily. Biotin synthase family. In terms of assembly, homodimer. Requires [4Fe-4S] cluster as cofactor. The cofactor is [2Fe-2S] cluster.

It carries out the reaction (4R,5S)-dethiobiotin + (sulfur carrier)-SH + 2 reduced [2Fe-2S]-[ferredoxin] + 2 S-adenosyl-L-methionine = (sulfur carrier)-H + biotin + 2 5'-deoxyadenosine + 2 L-methionine + 2 oxidized [2Fe-2S]-[ferredoxin]. The protein operates within cofactor biosynthesis; biotin biosynthesis; biotin from 7,8-diaminononanoate: step 2/2. In terms of biological role, catalyzes the conversion of dethiobiotin (DTB) to biotin by the insertion of a sulfur atom into dethiobiotin via a radical-based mechanism. The chain is Biotin synthase from Afipia carboxidovorans (strain ATCC 49405 / DSM 1227 / KCTC 32145 / OM5) (Oligotropha carboxidovorans).